The chain runs to 370 residues: Histidinol-phosphate aminotransferase (370 aa).

N6-(pyridoxal phosphate)lysine is present on Lys231.

It belongs to the class-II pyridoxal-phosphate-dependent aminotransferase family. Histidinol-phosphate aminotransferase subfamily. As to quaternary structure, homodimer. Pyridoxal 5'-phosphate serves as cofactor.

The catalysed reaction is L-histidinol phosphate + 2-oxoglutarate = 3-(imidazol-4-yl)-2-oxopropyl phosphate + L-glutamate. It functions in the pathway amino-acid biosynthesis; L-histidine biosynthesis; L-histidine from 5-phospho-alpha-D-ribose 1-diphosphate: step 7/9. In Paracidovorax citrulli (strain AAC00-1) (Acidovorax citrulli), this protein is Histidinol-phosphate aminotransferase.